A 414-amino-acid polypeptide reads, in one-letter code: STAGA complex 65 subunit gamma (414 aa).

The disordered stretch occupies residues 87 to 108 (NQQQTEGVKTEESEPLPSCPGS). Ser108 is modified (phosphoserine). Lys271 is covalently cross-linked (Glycyl lysine isopeptide (Lys-Gly) (interchain with G-Cter in SUMO2)). Phosphoserine is present on residues Ser323 and Ser334. A disordered region spans residues 346-414 (PQESEEGNVS…QRCKKRMRKI (69 aa)). Residues 386-395 (SSYGSHSTDS) show a composition bias toward low complexity.

In terms of assembly, component of the STAGA transcription coactivator-HAT complex, at least composed of SUPT3H, SUPT7L, GCN5L2, TAF5L, TAF6L, TADA3L, TAD1L, TAF10, TAF12 and TAF9. In terms of processing, sumoylated. As to expression, expressed at high levels in adenocarcinomas and gliomas and low in esophageal cancers and malignant hematological disease. Also expressed at high level in the thymus, low in peripheral blood mononuclear cells, and lowest in the stomach, small intestine, and skeletal muscle.

The protein resides in the nucleus. This chain is STAGA complex 65 subunit gamma (SUPT7L), found in Homo sapiens (Human).